A 238-amino-acid chain; its full sequence is Ribonuclease PH (238 aa).

Residues arginine 86 and 124-126 (GTR) each bind phosphate.

This sequence belongs to the RNase PH family. Homohexameric ring arranged as a trimer of dimers.

The catalysed reaction is tRNA(n+1) + phosphate = tRNA(n) + a ribonucleoside 5'-diphosphate. In terms of biological role, phosphorolytic 3'-5' exoribonuclease that plays an important role in tRNA 3'-end maturation. Removes nucleotide residues following the 3'-CCA terminus of tRNAs; can also add nucleotides to the ends of RNA molecules by using nucleoside diphosphates as substrates, but this may not be physiologically important. Probably plays a role in initiation of 16S rRNA degradation (leading to ribosome degradation) during starvation. This is Ribonuclease PH from Actinobacillus succinogenes (strain ATCC 55618 / DSM 22257 / CCUG 43843 / 130Z).